The chain runs to 388 residues: Cell adhesion molecule 4 (388 aa).

Positions 1–20 are cleaved as a signal peptide; the sequence is MGRARRFQWPLLLLWAAAAG. Positions 21–119 constitute an Ig-like V-type domain; it reads PGTAQEVQTE…DTHHQIATLT (99 aa). Residues 25-324 lie on the Extracellular side of the membrane; the sequence is QEVQTENVTV…VEAQTSVPYA (300 aa). 2 N-linked (GlcNAc...) asparagine glycosylation sites follow: Asn-31 and Asn-67. 3 disulfides stabilise this stretch: Cys-44–Cys-104, Cys-145–Cys-199, and Cys-245–Cys-291. 2 Ig-like C2-type domains span residues 124 to 219 and 224 to 307; these read PENP…YVLD and PTAR…YVLV. Asn-286 carries N-linked (GlcNAc...) asparagine glycosylation. The helical transmembrane segment at 325 to 345 threads the bilayer; that stretch reads IVGGILALLVFLIICVLVGMV. Over 346-388 the chain is Cytoplasmic; sequence WCSVRQKGSYLTHEASGLDEQGEAREAFLNGSDGHKRKEEFFI. Residue Ser-361 is modified to Phosphoserine.

Belongs to the nectin family. In terms of assembly, monomer and homodimer. In terms of processing, N-glycosylated.

It is found in the membrane. Involved in the cell-cell adhesion. Has calcium- and magnesium-independent cell-cell adhesion activity. May have tumor-suppressor activity. This chain is Cell adhesion molecule 4 (Cadm4), found in Rattus norvegicus (Rat).